We begin with the raw amino-acid sequence, 173 residues long: Photosystem I assembly protein Ycf3 (173 aa).

TPR repeat units lie at residues 35–68, 72–105, and 120–153; these read AFVYYRDGMSAQADGEYAEALDNYEEALRLEENP, SYILYNMALIHASNGDHEKALGLYQEAIELNPKM, and GEKAKEAGQEDDAENLFDKAAEYWKQAIRLAPNN.

This sequence belongs to the Ycf3 family.

The protein resides in the cellular thylakoid membrane. In terms of biological role, essential for the assembly of the photosystem I (PSI) complex. May act as a chaperone-like factor to guide the assembly of the PSI subunits. This chain is Photosystem I assembly protein Ycf3, found in Synechocystis sp. (strain ATCC 27184 / PCC 6803 / Kazusa).